The following is a 155-amino-acid chain: 2-C-methyl-D-erythritol 2,4-cyclodiphosphate synthase (155 aa).

Residues D10, H12, and H46 each contribute to the a divalent metal cation site. 10 to 12 (DSH) lines the 4-CDP-2-C-methyl-D-erythritol 2-phosphate pocket. Residues 60-62 (DIG), 65-69 (FDEND), and K140 each bind 4-CDP-2-C-methyl-D-erythritol 2-phosphate.

Belongs to the IspF family. In terms of assembly, homotrimer. It depends on a divalent metal cation as a cofactor.

The enzyme catalyses 4-CDP-2-C-methyl-D-erythritol 2-phosphate = 2-C-methyl-D-erythritol 2,4-cyclic diphosphate + CMP. Its pathway is isoprenoid biosynthesis; isopentenyl diphosphate biosynthesis via DXP pathway; isopentenyl diphosphate from 1-deoxy-D-xylulose 5-phosphate: step 4/6. Its function is as follows. Involved in the biosynthesis of isopentenyl diphosphate (IPP) and dimethylallyl diphosphate (DMAPP), two major building blocks of isoprenoid compounds. Catalyzes the conversion of 4-diphosphocytidyl-2-C-methyl-D-erythritol 2-phosphate (CDP-ME2P) to 2-C-methyl-D-erythritol 2,4-cyclodiphosphate (ME-CPP) with a corresponding release of cytidine 5-monophosphate (CMP). The sequence is that of 2-C-methyl-D-erythritol 2,4-cyclodiphosphate synthase from Mycoplasmoides gallisepticum (strain R(low / passage 15 / clone 2)) (Mycoplasma gallisepticum).